The following is a 420-amino-acid chain: Corticotropin-releasing factor receptor 1 (420 aa).

Residues 1–28 (MVPGPRPALLLLLFLLQAFLLWDSPVAA) form the signal peptide. The Extracellular portion of the chain corresponds to 29 to 116 (SIQEQYCESL…CQEILSEEKR (88 aa)). Disulfide bonds link C35–C59, C49–C92, and C73–C107. N43, N50, N83, N95, and N103 each carry an N-linked (GlcNAc...) asparagine glycan. The helical transmembrane segment at 117 to 147 (SKLHYHIAVIINYLGHCVSLGTLLVAFVLFM) threads the bilayer. Residues 148-154 (RLRSIRC) are Cytoplasmic-facing. Residues 155-179 (LRNIIHWNLITAFILRNATWFVVQL) form a helical membrane-spanning segment. At 180 to 194 (TMNPEVHESNVVWCR) the chain is on the extracellular side. Cysteines 193 and 263 form a disulfide. A helical transmembrane segment spans residues 195-223 (LVTAAYNYFHVTNFFWMFGEGCYLHTAIV). Topologically, residues 224–230 (LTYSTDK) are cytoplasmic. A helical membrane pass occupies residues 231 to 258 (LRKWMFICIGWCIPFPIIVAWAIGKLYY). The Extracellular portion of the chain corresponds to 259-274 (DNEKCWFGKRAGVYTD). A helical transmembrane segment spans residues 275–300 (YIYQGPMILVLLINFIFLFNIVRILM). Residues 301–311 (TKLRASTTSET) lie on the Cytoplasmic side of the membrane. Residues 312 to 336 (IQYRKAVKATLVLLSLLGITYMLFF) form a helical membrane-spanning segment. At 337–343 (VNPGEDE) the chain is on the extracellular side. The helical transmembrane segment at 344–373 (ISRIVFIYFNSFLESFQGFFVSVFYCFLNS) threads the bilayer. At 374–420 (EVRSAVRKRWHRWQDKHSIRARVARAMSIPTSPTRVSFHSIKQSSAV) the chain is on the cytoplasmic side.

This sequence belongs to the G-protein coupled receptor 2 family. Interacts (via N-terminal extracellular domain) with CRF and UCN.

The protein resides in the cell membrane. Its function is as follows. G-protein coupled receptor for CRH (corticotropin-releasing factor) and UCN (urocortin). Has high affinity for CRH and UCN. Ligand binding causes a conformation change that triggers signaling via guanine nucleotide-binding proteins (G proteins) and down-stream effectors, such as adenylate cyclase. Promotes the activation of adenylate cyclase, leading to increased intracellular cAMP levels. This Gallus gallus (Chicken) protein is Corticotropin-releasing factor receptor 1 (CRHR1).